The primary structure comprises 148 residues: Aspartate 1-decarboxylase (148 aa).

The active-site Schiff-base intermediate with substrate; via pyruvic acid is the serine 25. At serine 25 the chain carries Pyruvic acid (Ser). Position 57 (threonine 57) interacts with substrate. The active-site Proton donor is tyrosine 58. 73–75 is a binding site for substrate; sequence GAA.

It belongs to the PanD family. Heterooctamer of four alpha and four beta subunits. Requires pyruvate as cofactor. Post-translationally, is synthesized initially as an inactive proenzyme, which is activated by self-cleavage at a specific serine bond to produce a beta-subunit with a hydroxyl group at its C-terminus and an alpha-subunit with a pyruvoyl group at its N-terminus.

Its subcellular location is the cytoplasm. The enzyme catalyses L-aspartate + H(+) = beta-alanine + CO2. It participates in cofactor biosynthesis; (R)-pantothenate biosynthesis; beta-alanine from L-aspartate: step 1/1. Catalyzes the pyruvoyl-dependent decarboxylation of aspartate to produce beta-alanine. This Rhodococcus jostii (strain RHA1) protein is Aspartate 1-decarboxylase.